The following is a 235-amino-acid chain: Orotidine 5'-phosphate decarboxylase (235 aa).

Substrate contacts are provided by residues aspartate 10, lysine 33, 60 to 69 (DLKMSDIPNT), threonine 123, arginine 185, glutamine 194, glycine 214, and arginine 215. Catalysis depends on lysine 62, which acts as the Proton donor.

This sequence belongs to the OMP decarboxylase family. Type 1 subfamily. In terms of assembly, homodimer.

It catalyses the reaction orotidine 5'-phosphate + H(+) = UMP + CO2. The protein operates within pyrimidine metabolism; UMP biosynthesis via de novo pathway; UMP from orotate: step 2/2. Catalyzes the decarboxylation of orotidine 5'-monophosphate (OMP) to uridine 5'-monophosphate (UMP). The polypeptide is Orotidine 5'-phosphate decarboxylase (Lactobacillus gasseri (strain ATCC 33323 / DSM 20243 / BCRC 14619 / CIP 102991 / JCM 1131 / KCTC 3163 / NCIMB 11718 / NCTC 13722 / AM63)).